We begin with the raw amino-acid sequence, 625 residues long: DELLA protein SLR1 (625 aa).

Residues 1–34 are disordered; sequence MKREYQEAGGSSGGGSSADMGSCKDKVMAGAAGE. The DELLA motif signature appears at 39–43; that stretch reads DELLA. The disordered stretch occupies residues 167-208; sequence TADPSAADSARDTKRMRTGGGSTSSSSSSSSSLGGGASRGSV. The segment covering 189-198 has biased composition (low complexity); sequence TSSSSSSSSS. A GRAS domain is found at 232 to 621; sequence VDTQEAGIRL…RPLIATSAWR (390 aa). The leucine repeat I (LRI) stretch occupies residues 239-294; sequence IRLVHALLACAEAVQQENFAAAEALVKQIPTLAASQGGAMRKVAAYFGEALARRVY. The segment at 241 to 278 is required for possible homodimerization; it reads LVHALLACAEAVQQENFAAAEALVKQIPTLAASQGGAM. The short motif at 246–250 is the LxCxE motif element; that stretch reads LACAE. The tract at residues 313 to 378 is VHIID; it reads HAHFYESCPY…GGPPSFRLTG (66 aa). Residues 344–348 carry the VHIID motif; sequence VHVVD. Positions 392–431 are leucine repeat II (LRII); sequence QVGWKLAQFAHTIRVDFQYRGLVAATLADLEPFMLQPEGE. The PFYRE stretch occupies residues 441 to 542; it reads IAVNSVFELH…EVYLGRQICN (102 aa). An LXXLL motif motif is present at residues 449 to 453; the sequence is LHRLL. The SAW stretch occupies residues 545 to 621; the sequence is ACEGAERTER…RPLIATSAWR (77 aa).

It belongs to the GRAS family. DELLA subfamily.

Probable transcriptional regulator that acts as a repressor of the gibberellin (GA) signaling pathway. Probably acts by participating in large multiprotein complexes that repress transcription of GA-inducible genes. Upon GA application, it is degraded by the proteasome, allowing the GA signaling pathway. In contrast, its overexpression prevents the GA signaling pathway and induces a dwarf phenotype. This Oryza sativa subsp. indica (Rice) protein is DELLA protein SLR1.